The chain runs to 130 residues: METPLKAPESSLKSCNEPFSRTSEQDVATQELARQGEEILSQLYRPLETCNNSCYCKRCCYHCQMCFLNKGLGICYERKGRRRRTPKKTKTHPSPTPDKSISTRTGDSQPTKKQKKTVEATVETDTGPGR.

A disordered region spans residues M1 to T29. A compositionally biased stretch (polar residues) spans S11–A28. The interval C50–C66 is cysteine-rich. Residues F67–E77 form a core region. The short motif at R78–K90 is the Nuclear localization signal, and RNA-binding (TAR) element. Over residues K79 to T91 the composition is skewed to basic residues. The tract at residues K79–R130 is disordered. T85 and T89 each carry phosphothreonine; by host CDK9. Phosphoserine; by host CDK9 is present on S94. Positions K99–T111 are enriched in polar residues.

Belongs to the lentiviruses Tat family. In terms of assembly, interacts with host CCNT1. Associates with the P-TEFb complex composed at least of Tat, P-TEFb (CDK9 and CCNT1), TAR RNA, RNA Pol II. Interacts with CCNT2; the resulting complex is unable to bind to TAR RNA. Post-translationally, the phosphorylation by CDK9 does not seem to be important for transactivation function.

The protein localises to the host nucleus. It localises to the host nucleolus. Its function is as follows. Transcriptional activator that increases RNA Pol II processivity, thereby increasing the level of full-length viral transcripts. Recognizes a hairpin structure at the 5'-LTR of the nascent viral mRNAs referred to as the transactivation responsive RNA element (TAR) and recruits the cyclin T1-CDK9 complex (P-TEFb complex) that will in turn hyperphosphorylate the RNA polymerase II to allow efficient elongation. The CDK9 component of P-TEFb and other Tat-activated kinases hyperphosphorylate the C-terminus of RNA Pol II that becomes stabilized and much more processive. Functionally, extracellular circulating Tat can be endocytosed by surrounding uninfected cells via the binding to several surface receptors. Endosomal low pH allows Tat to cross the endosome membrane to enter the cytosol and eventually further translocate into the nucleus, thereby inducing severe cell dysfunctions ranging from cell activation to cell death. Through. This is Protein Tat (tat) from Human immunodeficiency virus type 2 subtype A (isolate ROD) (HIV-2).